The following is a 196-amino-acid chain: SERTA domain-containing protein 3 (196 aa).

The segment at 1 to 21 (MVGGLKRKHSDLEEEEERWEW) is disordered. The SERTA domain occupies 26–73 (LQSYQQALLRISLDKVQRSLGPRAPSLRRHVLIHNTLQQLQAALRLAP). The segment at 104-125 (TSMDGTEPPQNPVTPLGLQNEV) is disordered.

In terms of assembly, interacts with RPA2. As to quaternary structure, (Microbial infection) Interacts with influenza virus PA, PB1 and PB2,leading to inhibition of RdRp complex assembly. (Microbial infection) Interacts with zika virus capsid protein.

Its subcellular location is the nucleus. Functionally, antiviral interferon-stimulated protein that plays a role in innate immunity and in the suppression of viruses through different mechanisms. Plays a role in the late phase response of TLR-induced immune effector expression. During influenza infection, interacts with PB2, PB1, and PA to disrupt the formation of the viral RdRp complex. Inhibits zika virus by interacting with the capsid protein in the nucleolus and reducing its abundance through proteasomal degradation. Strong transcriptional coactivator. The chain is SERTA domain-containing protein 3 (SERTAD3) from Homo sapiens (Human).